Here is a 606-residue protein sequence, read N- to C-terminus: Kelch-like protein 26 (606 aa).

Over residues 1 to 19 the composition is skewed to low complexity; it reads MAESGGSSGSSQSPERPSS. Residues 1 to 20 form a disordered region; it reads MAESGGSSGSSQSPERPSSL. The residue at position 2 (alanine 2) is an N-acetylalanine. Positions 54–121 constitute a BTB domain; it reads LDVVLTVNSE…AYSAEVTLDL (68 aa). In terms of domain architecture, BACK spans 156 to 257; sequence CLHIGQMATT…QPAELVDSVQ (102 aa). Kelch repeat units lie at residues 301–352, 353–404, 406–451, 452–499, 501–550, and 552–599; these read SLVA…VLDN, FVYV…ALGG, LYAT…AAAG, RLYI…GAAG, IYAL…LLER, and IYIV…AVLL. Phosphoserine is present on serine 430.

Functionally, may play a role in endo(sarco)plasmic reticulum (ER/SR) mitochondrial signaling. May be part of the ubiquitin-proteasome system (UPS) and affect ubiquitination and degradation of target substrates in cardiomyocytes. In Mus musculus (Mouse), this protein is Kelch-like protein 26 (Klhl26).